Reading from the N-terminus, the 143-residue chain is MTTSRRKAREIVLQALYEQDLAGHNAEDVLKRLLTETPQTEENAEFIFRLTNAIVKHKDLLDENIRQFASAWPVEQLSYIDRNVLRLAIFEIIHENDVPIKVAINEAVELAKSFGGNSSARFINGVLSSVSKALADTAKQREE.

This sequence belongs to the NusB family.

Functionally, involved in transcription antitermination. Required for transcription of ribosomal RNA (rRNA) genes. Binds specifically to the boxA antiterminator sequence of the ribosomal RNA (rrn) operons. In Dehalococcoides mccartyi (strain ATCC BAA-2266 / KCTC 15142 / 195) (Dehalococcoides ethenogenes (strain 195)), this protein is Transcription antitermination protein NusB.